The sequence spans 255 residues: uncharacterized protein (255 aa).

The N-terminal stretch at 1-22 (MNILSPIIIIIILIVLFYVMRM) is a signal peptide.

This is an uncharacterized protein from Acanthamoeba polyphaga (Amoeba).